The following is a 129-amino-acid chain: Small ribosomal subunit protein uS11 (129 aa).

The protein belongs to the universal ribosomal protein uS11 family. As to quaternary structure, part of the 30S ribosomal subunit. Interacts with proteins S7 and S18. Binds to IF-3.

Its function is as follows. Located on the platform of the 30S subunit, it bridges several disparate RNA helices of the 16S rRNA. Forms part of the Shine-Dalgarno cleft in the 70S ribosome. In Pseudomonas entomophila (strain L48), this protein is Small ribosomal subunit protein uS11.